Here is a 401-residue protein sequence, read N- to C-terminus: Probable 2,3-bisphosphoglycerate-independent phosphoglycerate mutase (401 aa).

Belongs to the BPG-independent phosphoglycerate mutase family. A-PGAM subfamily.

It catalyses the reaction (2R)-2-phosphoglycerate = (2R)-3-phosphoglycerate. Its pathway is carbohydrate degradation; glycolysis; pyruvate from D-glyceraldehyde 3-phosphate: step 3/5. Functionally, catalyzes the interconversion of 2-phosphoglycerate and 3-phosphoglycerate. This Thermotoga sp. (strain RQ2) protein is Probable 2,3-bisphosphoglycerate-independent phosphoglycerate mutase.